The following is a 1033-amino-acid chain: RNA cytidine acetyltransferase (1033 aa).

ATP contacts are provided by residues 285 to 294 (GRGKSAALGL) and R465. An N-acetyltransferase domain is found at 560 to 694 (VDLKNPKLPD…IHVRDAKTMP (135 aa)). Residues 626-628 (IAV), 633-639 (VKMGYGT), and R727 each bind acetyl-CoA. The segment at 988 to 1033 (ENQIQKTNGKGARVVSIKGEKRKNNSLDASDKKTKEKPSSKKKFRK) is disordered. Basic and acidic residues predominate over residues 1005 to 1026 (KGEKRKNNSLDASDKKTKEKPS).

This sequence belongs to the RNA cytidine acetyltransferase family. NAT10 subfamily. Interacts with tan1.

Its subcellular location is the nucleus. The protein localises to the nucleolus. The enzyme catalyses a cytidine in 18S rRNA + acetyl-CoA + ATP + H2O = an N(4)-acetylcytidine in 18S rRNA + ADP + phosphate + CoA + H(+). It carries out the reaction a cytidine in tRNA + acetyl-CoA + ATP + H2O = an N(4)-acetylcytidine in tRNA + ADP + phosphate + CoA + H(+). Functionally, RNA cytidine acetyltransferase with specificity toward both 18S rRNA and tRNAs. Catalyzes the formation of N(4)-acetylcytidine (ac4C) at positions 1297 and 1815 in 18S rRNA. Required for early nucleolar cleavages of precursor rRNA at sites A0, A1 and A2 during 18S rRNA synthesis. Catalyzes the formation of ac4C in serine and leucine tRNAs. Requires the tRNA-binding adapter protein tan1 for full tRNA acetyltransferase activity but not for 18S rRNA acetylation. The polypeptide is RNA cytidine acetyltransferase (Schizosaccharomyces pombe (strain 972 / ATCC 24843) (Fission yeast)).